The following is a 317-amino-acid chain: 17-beta-hydroxysteroid dehydrogenase type 6 (317 aa).

The signal sequence occupies residues 1-17; that stretch reads MWLYLAVLLGLYYLLRW. NAD(+) is bound at residue 33-57; it reads FITGCDSGFGNQLARQLDLRGLRVL. N-linked (GlcNAc...) asparagine glycans are attached at residues asparagine 71 and asparagine 161. Serine 164 is a substrate binding site. The active-site Proton acceptor is the tyrosine 176.

The protein belongs to the short-chain dehydrogenases/reductases (SDR) family.

It localises to the microsome membrane. Its subcellular location is the endoplasmic reticulum membrane. It carries out the reaction all-trans-retinol--[retinol-binding protein] + NAD(+) = all-trans-retinal--[retinol-binding protein] + NADH + H(+). The enzyme catalyses all-trans-retinol + NAD(+) = all-trans-retinal + NADH + H(+). It catalyses the reaction androsterone + NAD(+) = 5alpha-androstan-3,17-dione + NADH + H(+). The catalysed reaction is testosterone + NAD(+) = androst-4-ene-3,17-dione + NADH + H(+). It carries out the reaction 5alpha-androstane-3alpha,17beta-diol + NAD(+) = 17beta-hydroxy-5alpha-androstan-3-one + NADH + H(+). The enzyme catalyses 17beta-estradiol + NAD(+) = estrone + NADH + H(+). It catalyses the reaction 17beta-estradiol + NADP(+) = estrone + NADPH + H(+). The catalysed reaction is 3alpha-hydroxy-5alpha-pregnan-20-one + NAD(+) = 5alpha-pregnane-3,20-dione + NADH + H(+). It carries out the reaction 5alpha-androstane-3beta,17beta-diol + NAD(+) = 17beta-hydroxy-5alpha-androstan-3-one + NADH + H(+). The enzyme catalyses 3beta-hydroxy-5alpha-androstan-17-one + NAD(+) = 5alpha-androstan-3,17-dione + NADH + H(+). Its function is as follows. NAD-dependent oxidoreductase with broad substrate specificity that shows both oxidative and reductive activity (in vitro). Has 17-beta-hydroxysteroid dehydrogenase activity towards various steroids (in vitro). Converts 5-alpha-androstan-3-alpha,17-beta-diol to androsterone and estradiol to estrone (in vitro). Has 3-alpha-hydroxysteroid dehydrogenase activity towards androsterone (in vitro). Has retinol dehydrogenase activity towards all-trans-retinol (in vitro). Can convert androsterone to epi-androsterone. Androsterone is first oxidized to 5-alpha-androstane-3,17-dione and then reduced to epi-andosterone. Can act on both C-19 and C-21 3-alpha-hydroxysteroids. The sequence is that of 17-beta-hydroxysteroid dehydrogenase type 6 (HSD17B6) from Bos taurus (Bovine).